Reading from the N-terminus, the 415-residue chain is Esterase FrsA (415 aa).

The interval 1 to 23 (MANRNLSESLFKPRQKHQETSTL) is disordered.

The protein belongs to the FrsA family.

It catalyses the reaction a carboxylic ester + H2O = an alcohol + a carboxylate + H(+). In terms of biological role, catalyzes the hydrolysis of esters. This is Esterase FrsA from Photorhabdus laumondii subsp. laumondii (strain DSM 15139 / CIP 105565 / TT01) (Photorhabdus luminescens subsp. laumondii).